The primary structure comprises 525 residues: Packaging protein UL32 homolog (525 aa).

Residues 1-12 show a composition bias toward polar residues; that stretch reads MAHKVTSANEPN. A disordered region spans residues 1–20; sequence MAHKVTSANEPNPLTGKRLS. 12 residues coordinate Zn(2+): C95, C98, H173, C179, C255, C256, C357, C360, H427, C434, C473, and H510. Zinc finger stretches follow at residues 95 to 179, 255 to 510, and 357 to 434; these read CRVC…ICRC, CCHL…LRIH, and CPLC…DPLC.

The protein belongs to the herpesviridae UL32 protein family.

The protein localises to the host cytoplasm. It is found in the host nucleus. Functionally, plays a role in efficient localization of neo-synthesized capsids to nuclear replication compartments, thereby controlling cleavage and packaging of virus genomic DNA. The protein is Packaging protein UL32 homolog of Epstein-Barr virus (strain B95-8) (HHV-4).